A 381-amino-acid polypeptide reads, in one-letter code: GDP-mannose-dependent monoacylated alpha-(1-6)-phosphatidylinositol monomannoside mannosyltransferase (381 aa).

GDP-alpha-D-mannose is bound by residues Arg-206, Lys-211, Leu-261, and Glu-298.

Belongs to the glycosyltransferase group 1 family. Glycosyltransferase 4 subfamily.

The enzyme catalyses a 1,2-diacyl-sn-glycero-3-phospho-[alpha-D-mannopyranosyl-(1&lt;-&gt;6)-D-myo-inositol] + GDP-alpha-D-mannose = a 2,6-O-bis(alpha-D-mannopyranosyl)-1-phosphatidyl-1D-myo-inositol + GDP + H(+). It catalyses the reaction a 1,2-diacyl-sn-glycero-3-phospho-[alpha-D-6-acyl-mannopyranosyl-(1&lt;-&gt;6)-D-myo-inositol] + GDP-alpha-D-mannose = a 2-O-(alpha-D-mannosyl)-6-O-(6-O-acyl-alpha-D-mannosyl)-1-phosphatidyl-1D-myo-inositol + GDP + H(+). Its pathway is phospholipid metabolism; phosphatidylinositol metabolism. Functionally, involved in the biosynthesis of phosphatidyl-myo-inositol mannosides (PIM) which are early precursors in the biosynthesis of lipomannans (LM) and lipoarabinomannans (LAM). Catalyzes the addition of a mannosyl residue from GDP-D-mannose (GDP-Man) to the position 6 of a phosphatidyl-myo-inositol bearing an alpha-1,2-linked mannose residue (PIM1) to generate phosphatidyl-myo-inositol bearing alpha-1,2- and alpha-1,6-linked mannose residues (Ac1PIM2). PimB also catalyzes the addition of a mannosyl residue from GDP-Man to the position 6 of phosphatidyl-myo-inositol bearing an acylated alpha-1,2-linked mannose residue (Ac1PIM1) to generate monoacylated phosphatidyl-myo-inositol bearing alpha-1,2- and alpha-1,6-linked mannose residues (Ac1PIM2). The addition of the second mannosyl residue by PimB preferentially occurs before the acylation of the mannosyl residue transferred by PimA. Also able to transfer a mannosyl residue from GDP-Man to the position 6 of a phosphatidyl-myo-inositol (PI), but this reaction is very slow. This is GDP-mannose-dependent monoacylated alpha-(1-6)-phosphatidylinositol monomannoside mannosyltransferase from Corynebacterium glutamicum (strain ATCC 13032 / DSM 20300 / JCM 1318 / BCRC 11384 / CCUG 27702 / LMG 3730 / NBRC 12168 / NCIMB 10025 / NRRL B-2784 / 534).